Reading from the N-terminus, the 562-residue chain is Dihydroxy-acid dehydratase (562 aa).

D80 provides a ligand contact to Mg(2+). [2Fe-2S] cluster is bound at residue C121. Positions 122 and 123 each coordinate Mg(2+). K123 carries the N6-carboxylysine modification. A [2Fe-2S] cluster-binding site is contributed by C194. E446 contacts Mg(2+). S472 (proton acceptor) is an active-site residue.

This sequence belongs to the IlvD/Edd family. As to quaternary structure, homodimer. [2Fe-2S] cluster is required as a cofactor. Mg(2+) serves as cofactor.

It carries out the reaction (2R)-2,3-dihydroxy-3-methylbutanoate = 3-methyl-2-oxobutanoate + H2O. The enzyme catalyses (2R,3R)-2,3-dihydroxy-3-methylpentanoate = (S)-3-methyl-2-oxopentanoate + H2O. Its pathway is amino-acid biosynthesis; L-isoleucine biosynthesis; L-isoleucine from 2-oxobutanoate: step 3/4. It participates in amino-acid biosynthesis; L-valine biosynthesis; L-valine from pyruvate: step 3/4. Functions in the biosynthesis of branched-chain amino acids. Catalyzes the dehydration of (2R,3R)-2,3-dihydroxy-3-methylpentanoate (2,3-dihydroxy-3-methylvalerate) into 2-oxo-3-methylpentanoate (2-oxo-3-methylvalerate) and of (2R)-2,3-dihydroxy-3-methylbutanoate (2,3-dihydroxyisovalerate) into 2-oxo-3-methylbutanoate (2-oxoisovalerate), the penultimate precursor to L-isoleucine and L-valine, respectively. The sequence is that of Dihydroxy-acid dehydratase from Staphylococcus aureus (strain MRSA252).